A 184-amino-acid chain; its full sequence is Lipoprotein signal peptidase (184 aa).

The next 3 membrane-spanning stretches (helical) occupy residues 23-43 (FLYY…FQVF), 88-108 (PGLV…FLVF), and 110-130 (TSYN…GNFF). Active-site residues include Asp-142 and Asp-157. Residues 156–176 (ADCCITFSFIGLFLSFLIQFF) traverse the membrane as a helical segment.

It belongs to the peptidase A8 family.

The protein resides in the cell membrane. It carries out the reaction Release of signal peptides from bacterial membrane prolipoproteins. Hydrolyzes -Xaa-Yaa-Zaa-|-(S,diacylglyceryl)Cys-, in which Xaa is hydrophobic (preferably Leu), and Yaa (Ala or Ser) and Zaa (Gly or Ala) have small, neutral side chains.. The protein operates within protein modification; lipoprotein biosynthesis (signal peptide cleavage). Functionally, this protein specifically catalyzes the removal of signal peptides from prolipoproteins. In Mycoplasma pneumoniae (strain ATCC 29342 / M129 / Subtype 1) (Mycoplasmoides pneumoniae), this protein is Lipoprotein signal peptidase.